The chain runs to 79 residues: Sulfur carrier protein TusA (79 aa).

Cysteine 17 functions as the Cysteine persulfide intermediate in the catalytic mechanism.

This sequence belongs to the sulfur carrier protein TusA family.

The protein resides in the cytoplasm. Its function is as follows. Sulfur carrier protein which probably makes part of a sulfur-relay system. The protein is Sulfur carrier protein TusA of Actinobacillus succinogenes (strain ATCC 55618 / DSM 22257 / CCUG 43843 / 130Z).